We begin with the raw amino-acid sequence, 236 residues long: Leucyl/phenylalanyl-tRNA--protein transferase (236 aa).

It belongs to the L/F-transferase family.

It localises to the cytoplasm. It catalyses the reaction N-terminal L-lysyl-[protein] + L-leucyl-tRNA(Leu) = N-terminal L-leucyl-L-lysyl-[protein] + tRNA(Leu) + H(+). It carries out the reaction N-terminal L-arginyl-[protein] + L-leucyl-tRNA(Leu) = N-terminal L-leucyl-L-arginyl-[protein] + tRNA(Leu) + H(+). The catalysed reaction is L-phenylalanyl-tRNA(Phe) + an N-terminal L-alpha-aminoacyl-[protein] = an N-terminal L-phenylalanyl-L-alpha-aminoacyl-[protein] + tRNA(Phe). In terms of biological role, functions in the N-end rule pathway of protein degradation where it conjugates Leu, Phe and, less efficiently, Met from aminoacyl-tRNAs to the N-termini of proteins containing an N-terminal arginine or lysine. The polypeptide is Leucyl/phenylalanyl-tRNA--protein transferase (Shewanella oneidensis (strain ATCC 700550 / JCM 31522 / CIP 106686 / LMG 19005 / NCIMB 14063 / MR-1)).